Reading from the N-terminus, the 204-residue chain is Putative AgrB-like protein (204 aa).

The next 4 helical transmembrane spans lie at 40 to 60, 87 to 107, 111 to 131, and 156 to 176; these read IILINVMKFAIVYGISLATGL, LNCTLISLAMFVLAPFVFQNI, NWIVLGTFAFILLNMFLFAPA, and LILTGIALLIPFAEMKTLIMV.

The protein belongs to the AgrB family.

The protein localises to the cell membrane. Functionally, may be involved in the proteolytic processing of a quorum sensing system signal molecule precursor. This chain is Putative AgrB-like protein, found in Listeria welshimeri serovar 6b (strain ATCC 35897 / DSM 20650 / CCUG 15529 / CIP 8149 / NCTC 11857 / SLCC 5334 / V8).